Here is a 456-residue protein sequence, read N- to C-terminus: Probable mannan endo-1,4-beta-mannosidase F (456 aa).

The N-terminal stretch at 1–18 (MRPLSSAALLSAIGAVAA) is a signal peptide. The CBM1 domain occupies 19 to 54 (QVGPWGQCGGQSYTGGTSCVSGWACVFLNDWYSQCQ). The tract at residues 79-110 (STSVSATAPPSSTSSSTASVSSSTSSTPIPTS) is disordered. The interval 79-113 (STSVSATAPPSSTSSSTASVSSSTSSTPIPTSSGS) is ser-rich linker. A catalytic region spans residues 114-456 (FVKAEGLKFN…CAVIDHVSRI (343 aa)). Substrate-binding residues include Trp-166 and Asn-280. Glu-281 serves as the catalytic Proton donor. Tyr-356 provides a ligand contact to substrate. Catalysis depends on Glu-390, which acts as the Nucleophile. Trp-420 contributes to the substrate binding site.

This sequence belongs to the glycosyl hydrolase 5 (cellulase A) family.

The protein resides in the secreted. It catalyses the reaction Random hydrolysis of (1-&gt;4)-beta-D-mannosidic linkages in mannans, galactomannans and glucomannans.. In terms of biological role, endo-1,4-mannanase, a crucial enzyme for depolymerization of seed galactomannans and wood galactoglucomannans. The sequence is that of Probable mannan endo-1,4-beta-mannosidase F (manF) from Neosartorya fischeri (strain ATCC 1020 / DSM 3700 / CBS 544.65 / FGSC A1164 / JCM 1740 / NRRL 181 / WB 181) (Aspergillus fischerianus).